The chain runs to 260 residues: Intermembrane phospholipid transport system permease protein MlaE (260 aa).

Topologically, residues M1 to N50 are cytoplasmic. A helical transmembrane segment spans residues V51–G71. Topologically, residues L72–G88 are periplasmic. Residues M89 to A109 traverse the membrane as a helical segment. The Cytoplasmic portion of the chain corresponds to G110–R147. A helical membrane pass occupies residues F148 to W168. Topologically, residues G169 to D198 are periplasmic. Residues L199–F219 form a helical membrane-spanning segment. Over N220–T238 the chain is Cytoplasmic. A helical transmembrane segment spans residues V239–G259. N260 is a topological domain (periplasmic).

It belongs to the MlaE permease family. In terms of assembly, the complex is composed of two ATP-binding proteins (MlaF), two transmembrane proteins (MlaE), two cytoplasmic solute-binding proteins (MlaB) and six periplasmic solute-binding proteins (MlaD).

Its subcellular location is the cell inner membrane. Functionally, part of the ABC transporter complex MlaFEDB, which is involved in a phospholipid transport pathway that maintains lipid asymmetry in the outer membrane by retrograde trafficking of phospholipids from the outer membrane to the inner membrane. Probably responsible for the translocation of the substrate across the membrane. The chain is Intermembrane phospholipid transport system permease protein MlaE from Escherichia coli O157:H7.